A 185-amino-acid polypeptide reads, in one-letter code: NAD(P)H-dependent FAD/FMN reductase GTNG_3158 (185 aa).

As to quaternary structure, anthranilate 3-monooxygenase consists of a reductase component (GTNG_3158) and an oxygenase component HpaH.

The catalysed reaction is FADH2 + NAD(+) = FAD + NADH + 2 H(+). It catalyses the reaction FADH2 + NADP(+) = FAD + NADPH + 2 H(+). In terms of biological role, involved in the pathway of tryptophan degradation. Reduces FAD/FMN to FADH(2)/FMNH(2), which are subsequently used for the hydroxylation of anthranilate. It can reduce either FAD or flavin mononucleotide (FMN) but prefers FAD. The enzyme has a slight preference for NADPH as acceptor. The polypeptide is NAD(P)H-dependent FAD/FMN reductase GTNG_3158 (Geobacillus thermodenitrificans (strain NG80-2)).